A 134-amino-acid polypeptide reads, in one-letter code: Small ribosomal subunit protein uS12 (134 aa).

The disordered stretch occupies residues 1-26 (MPTIQQLVRKGRESFADKSKSPALNS). Residues 10–20 (KGRESFADKSK) show a composition bias toward basic and acidic residues. At Asp89 the chain carries 3-methylthioaspartic acid. The tract at residues 103-134 (DTAGVNGRTQRRSKYGAKRPKPGQAPAAKGKK) is disordered. The span at 111–123 (TQRRSKYGAKRPK) shows a compositional bias: basic residues. Low complexity predominate over residues 124-134 (PGQAPAAKGKK).

It belongs to the universal ribosomal protein uS12 family. Part of the 30S ribosomal subunit. Contacts proteins S8 and S17. May interact with IF1 in the 30S initiation complex.

With S4 and S5 plays an important role in translational accuracy. Functionally, interacts with and stabilizes bases of the 16S rRNA that are involved in tRNA selection in the A site and with the mRNA backbone. Located at the interface of the 30S and 50S subunits, it traverses the body of the 30S subunit contacting proteins on the other side and probably holding the rRNA structure together. The combined cluster of proteins S8, S12 and S17 appears to hold together the shoulder and platform of the 30S subunit. The protein is Small ribosomal subunit protein uS12 of Porphyromonas gingivalis (strain ATCC BAA-308 / W83).